The following is a 180-amino-acid chain: Large ribosomal subunit protein uL5 (180 aa).

It belongs to the universal ribosomal protein uL5 family. In terms of assembly, part of the 50S ribosomal subunit; part of the 5S rRNA/L5/L18/L25 subcomplex. Contacts the 5S rRNA and the P site tRNA. Forms a bridge to the 30S subunit in the 70S ribosome.

This is one of the proteins that bind and probably mediate the attachment of the 5S RNA into the large ribosomal subunit, where it forms part of the central protuberance. In the 70S ribosome it contacts protein S13 of the 30S subunit (bridge B1b), connecting the 2 subunits; this bridge is implicated in subunit movement. Contacts the P site tRNA; the 5S rRNA and some of its associated proteins might help stabilize positioning of ribosome-bound tRNAs. This chain is Large ribosomal subunit protein uL5, found in Spiroplasma kunkelii.